The sequence spans 161 residues: Phosphopantetheine adenylyltransferase (161 aa).

Residue Thr9 coordinates substrate. ATP contacts are provided by residues Thr9–Phe10 and His17. Lys41, Leu73, and Arg87 together coordinate substrate. Residues Gly88 to Arg90, Glu98, and Tyr123 to Thr129 contribute to the ATP site.

Belongs to the bacterial CoaD family. Homohexamer. Mg(2+) is required as a cofactor.

The protein localises to the cytoplasm. The catalysed reaction is (R)-4'-phosphopantetheine + ATP + H(+) = 3'-dephospho-CoA + diphosphate. It functions in the pathway cofactor biosynthesis; coenzyme A biosynthesis; CoA from (R)-pantothenate: step 4/5. Its function is as follows. Reversibly transfers an adenylyl group from ATP to 4'-phosphopantetheine, yielding dephospho-CoA (dPCoA) and pyrophosphate. The polypeptide is Phosphopantetheine adenylyltransferase (Cupriavidus pinatubonensis (strain JMP 134 / LMG 1197) (Cupriavidus necator (strain JMP 134))).